A 610-amino-acid polypeptide reads, in one-letter code: tRNA uridine 5-carboxymethylaminomethyl modification enzyme MnmG (610 aa).

14 to 19 (GAGHAG) contacts FAD. 274–288 (GPRYCPSIEDKIVKF) is a binding site for NAD(+).

The protein belongs to the MnmG family. Homodimer. Heterotetramer of two MnmE and two MnmG subunits. It depends on FAD as a cofactor.

It is found in the cytoplasm. In terms of biological role, NAD-binding protein involved in the addition of a carboxymethylaminomethyl (cmnm) group at the wobble position (U34) of certain tRNAs, forming tRNA-cmnm(5)s(2)U34. The protein is tRNA uridine 5-carboxymethylaminomethyl modification enzyme MnmG of Chlamydia muridarum (strain MoPn / Nigg).